The chain runs to 838 residues: DNA gyrase subunit A (838 aa).

The Topo IIA-type catalytic domain occupies Leu-41–Leu-510. Tyr-129 (O-(5'-phospho-DNA)-tyrosine intermediate) is an active-site residue. Positions Gln-537 to Gly-543 match the GyrA-box motif.

Belongs to the type II topoisomerase GyrA/ParC subunit family. As to quaternary structure, heterotetramer, composed of two GyrA and two GyrB chains. In the heterotetramer, GyrA contains the active site tyrosine that forms a transient covalent intermediate with DNA, while GyrB binds cofactors and catalyzes ATP hydrolysis. It depends on Mg(2+) as a cofactor.

Its subcellular location is the cytoplasm. It catalyses the reaction ATP-dependent breakage, passage and rejoining of double-stranded DNA.. With respect to regulation, DNA supercoiling is inhibited by EDTA, novobiocin, coumermycin and ciprofloxacin. Its function is as follows. A type II topoisomerase that negatively supercoils closed circular double-stranded (ds) DNA in an ATP-dependent manner to modulate DNA topology and maintain chromosomes in an underwound state. Also catalyzes the interconversion of other topological isomers of double-stranded DNA rings, including catenanes and knotted rings. Relaxes negatively supercoiled DNA in an ATP-independent manner. A linear reaction intermediate can be trapped in the presence of the antibiotic ciprofloxacin. Negative supercoiling favors strand separation, and DNA replication, transcription, recombination and repair, all of which involve strand separation. Type II topoisomerases break and join 2 DNA strands simultaneously in an ATP-dependent manner. This is DNA gyrase subunit A from Mycobacterium bovis (strain BCG / Pasteur 1173P2).